Reading from the N-terminus, the 535-residue chain is CTP synthase (535 aa).

Residues 1–267 (MTKYIFVTGG…DKLVCEHMKL (267 aa)) form an amidoligase domain region. Serine 13 serves as a coordination point for CTP. Serine 13 serves as a coordination point for UTP. 14–19 (SLGKGI) contacts ATP. Residue tyrosine 54 coordinates L-glutamine. Aspartate 71 is an ATP binding site. Mg(2+)-binding residues include aspartate 71 and glutamate 141. CTP is bound by residues 148–150 (DIE), 188–193 (KTKPTQ), and lysine 224. UTP is bound by residues 188-193 (KTKPTQ) and lysine 224. The Glutamine amidotransferase type-1 domain occupies 292–534 (TIGLVGKYVE…IGASVEAANQ (243 aa)). Position 354 (glycine 354) interacts with L-glutamine. Cysteine 381 acts as the Nucleophile; for glutamine hydrolysis in catalysis. L-glutamine is bound by residues 382 to 385 (LGMQ), glutamate 405, and arginine 462. Residues histidine 507 and glutamate 509 contribute to the active site.

The protein belongs to the CTP synthase family. In terms of assembly, homotetramer. Interacts with BrxC.

It catalyses the reaction UTP + L-glutamine + ATP + H2O = CTP + L-glutamate + ADP + phosphate + 2 H(+). The catalysed reaction is L-glutamine + H2O = L-glutamate + NH4(+). It carries out the reaction UTP + NH4(+) + ATP = CTP + ADP + phosphate + 2 H(+). It functions in the pathway pyrimidine metabolism; CTP biosynthesis via de novo pathway; CTP from UDP: step 2/2. Its activity is regulated as follows. Allosterically activated by GTP, when glutamine is the substrate; GTP has no effect on the reaction when ammonia is the substrate. The allosteric effector GTP functions by stabilizing the protein conformation that binds the tetrahedral intermediate(s) formed during glutamine hydrolysis. Inhibited by the product CTP, via allosteric rather than competitive inhibition. Catalyzes the ATP-dependent amination of UTP to CTP with either L-glutamine or ammonia as the source of nitrogen. Regulates intracellular CTP levels through interactions with the four ribonucleotide triphosphates. This is CTP synthase from Bacillus subtilis (strain 168).